The primary structure comprises 155 residues: Small ribosomal subunit protein uS7c (155 aa).

It belongs to the universal ribosomal protein uS7 family. Part of the 30S ribosomal subunit.

It localises to the plastid. The protein resides in the chloroplast. One of the primary rRNA binding proteins, it binds directly to 16S rRNA where it nucleates assembly of the head domain of the 30S subunit. In Lilium superbum (Turk's cap lily), this protein is Small ribosomal subunit protein uS7c (rps7).